The primary structure comprises 398 residues: DNA-directed RNA polymerase III subunit RPC4 (398 aa).

The interval 1–149 is disordered; the sequence is MSEGNAAGEP…IKKEKRETDE (149 aa). The residue at position 2 (Ser-2) is an N-acetylserine. Ser-42 is subject to Phosphoserine. Composition is skewed to basic and acidic residues over residues 66–100, 116–128, and 140–149; these read KIKEEPKEEVTMKKEKRERDRDRQREGHGRGRGRP, MMKKKGNWDKTVD, and IKKEKRETDE. Glycyl lysine isopeptide (Lys-Gly) (interchain with G-Cter in SUMO2) cross-links involve residues Lys-68 and Lys-78. Arg-95, Arg-97, and Arg-99 each carry omega-N-methylarginine. Residues Lys-141, Lys-152, Lys-160, Lys-190, Lys-199, Lys-206, Lys-220, Lys-285, Lys-302, and Lys-396 each participate in a glycyl lysine isopeptide (Lys-Gly) (interchain with G-Cter in SUMO2) cross-link. Residues 191–244 form a disordered region; that stretch reads EESEEPEAKPFSAGPKEEDMEVDVPAVKVKEEPRDEEEEAKVKAPPRAARKTPG.

The protein belongs to the eukaryotic RPC4/POLR3D RNA polymerase subunit family. Component of the RNA polymerase III complex consisting of 17 subunits: a ten-subunit horseshoe-shaped catalytic core composed of POLR3A/RPC1, POLR3B/RPC2, POLR1C/RPAC1, POLR1D/RPAC2, POLR3K/RPC10, POLR2E/RPABC1, POLR2F/RPABC2, POLR2H/RPABC3, POLR2K/RPABC4 and POLR2L/RPABC5; a mobile stalk composed of two subunits POLR3H/RPC8 and CRCP/RPC9, protruding from the core and functioning primarily in transcription initiation; and additional subunits homologous to general transcription factors of the RNA polymerase II machinery, POLR3C/RPC3-POLR3F/RPC6-POLR3G/RPC7 heterotrimer required for transcription initiation and POLR3D/RPC4-POLR3E/RPC5 heterodimer involved in both transcription initiation and termination. Post-translationally, sumoylation on Lys-141 can serve as a signal to mark misfolded Pol III for proteasomal degradation.

The protein localises to the nucleus. DNA-dependent RNA polymerase catalyzes the transcription of DNA into RNA using the four ribonucleoside triphosphates as substrates. Specific peripheric component of RNA polymerase III (Pol III) which synthesizes small non-coding RNAs including 5S rRNA, snRNAs, tRNAs and miRNAs from at least 500 distinct genomic loci. Enables recruitment of Pol III at transcription initiation site and drives transcription initiation from both type 2 and type 3 DNA promoters. Required for efficient transcription termination and reinitiation. Pol III plays a key role in sensing and limiting infection by intracellular bacteria and DNA viruses. Acts as nuclear and cytosolic DNA sensor involved in innate immune response. Can sense non-self dsDNA that serves as template for transcription into dsRNA. The non-self RNA polymerase III transcripts, such as Epstein-Barr virus-encoded RNAs (EBERs) induce type I interferon and NF-kappa-B through the RIG-I pathway. This chain is DNA-directed RNA polymerase III subunit RPC4, found in Mus musculus (Mouse).